The following is a 124-amino-acid chain: UPF0225 protein SCO1677 (124 aa).

The protein belongs to the UPF0225 family.

The protein is UPF0225 protein SCO1677 of Streptomyces coelicolor (strain ATCC BAA-471 / A3(2) / M145).